The chain runs to 128 residues: Regulator of ribonuclease activity B (128 aa).

It belongs to the RraB family. In terms of assembly, interacts with the C-terminal region of Rne.

The protein localises to the cytoplasm. Globally modulates RNA abundance by binding to RNase E (Rne) and regulating its endonucleolytic activity. Can modulate Rne action in a substrate-dependent manner by altering the composition of the degradosome. The polypeptide is Regulator of ribonuclease activity B (Idiomarina loihiensis (strain ATCC BAA-735 / DSM 15497 / L2-TR)).